The chain runs to 363 residues: DNA repair protein rlp1 (363 aa).

This sequence belongs to the RecA family. RAD51 subfamily. As to quaternary structure, interacts with rdl1 and sws1.

Its subcellular location is the cytoplasm. The protein localises to the nucleus. Functionally, required for normal levels of meiotic recombination. Acts in the recombinational pathway of double-strand break (DSB) repair together with rhp51, rhp55 and rad22. Required for the full extent of DNA recombination and cell survival under condition of a replication fork collapse. The polypeptide is DNA repair protein rlp1 (Schizosaccharomyces pombe (strain 972 / ATCC 24843) (Fission yeast)).